Here is an 860-residue protein sequence, read N- to C-terminus: Endo-1,4-beta-xylanase B (860 aa).

Positions 1–20 (MKFSSANKILFSGLVASANA) are cleaved as a signal peptide. In terms of domain architecture, GH10 spans 21–324 (YDLLKDYAGD…KPVYNTLLNI (304 aa)). Catalysis depends on E144, which acts as the Proton donor. E255 functions as the Nucleophile in the catalytic mechanism. C278 and C284 are disulfide-bonded. N-linked (GlcNAc...) asparagine glycosylation is found at N295, N309, N359, and N374. Polar residues-rich tracts occupy residues 330–362 (RPAS…NKSK) and 371–418 (LPGN…NSKT). A disordered region spans residues 330-793 (RPASSSAKTL…TKTLPGGACK (464 aa)). Repeat 1 spans residues 375-382 (KSKTLPGG). The interval 375 to 782 (KSKTLPGGNS…GGKSKTLPGG (408 aa)) is 47 X 8 AA tandem repeats of [SKN]-S-K-T-L-P-G-G. An N-linked (GlcNAc...) asparagine glycan is attached at N390. Residues 391–398 (KSKTLPGG) form repeat 2. N-linked (GlcNAc...) asparagine glycosylation occurs at N406. 45 consecutive repeat copies span residues 415 to 422 (NSKTLPGG), 431 to 438 (NSKTLPGG), 439 to 446 (KSKTLPGG), 447 to 454 (NSKTLPGG), 455 to 462 (KSKTLPGG), 463 to 470 (NSKTLPGG), 471 to 478 (SSKTLPGG), 479 to 486 (KSKTLPGG), 487 to 494 (NSKTLPGG), 495 to 502 (SSKTLPGG), 503 to 510 (KSKTLPGG), 511 to 518 (SSKTLPGG), 519 to 526 (KSKTLPGG), 527 to 534 (NSKTLPGG), 535 to 542 (NSKTLPGG), 543 to 550 (SSKTLPGG), 551 to 558 (KSKTLPGG), 559 to 566 (NSKTLPGG), 567 to 574 (SSKTLPGG), 575 to 582 (KSKTLPGG), 583 to 590 (NSKTLPGG), 591 to 598 (NSKTLPGG), 599 to 606 (KSKTLPGG), 607 to 614 (NSKTLPGG), 615 to 622 (SSKTLPGG), 623 to 630 (KSKTLPGG), 631 to 638 (SSKTLPGG), 639 to 646 (KSKTLPGG), 647 to 654 (NSKTLPGG), 655 to 662 (NSKTLPGG), 663 to 670 (SSKTLPGG), 671 to 678 (KSKTLPGG), 679 to 686 (SSKTLPGG), 687 to 694 (KSKTLPGG), 695 to 702 (NSKTLPGG), 703 to 710 (KSKTLPGG), 711 to 718 (NSKTLPGG), 719 to 726 (KSKTLPGG), 727 to 734 (NSKTLPGG), 735 to 742 (KSKTLPGG), 743 to 750 (NSKTLPGG), 751 to 758 (SSKTLPGG), 759 to 766 (KSKTLPGG), 767 to 774 (NSKTLPGG), and 775 to 782 (KSKTLPGG). 2 stretches are compositionally biased toward polar residues: residues 461 to 474 (GGNS…SSKT) and 485 to 498 (GGNS…SSKT). 4 stretches are compositionally biased toward polar residues: residues 525–546 (GGNS…SSKT), 557–570 (GGNS…SSKT), 581–594 (GGNS…NSKT), and 605–618 (GGNS…SSKT). Positions 645–666 (GGNSKTLPGGNSKTLPGGSSKT) are enriched in polar residues. Polar residues predominate over residues 741 to 754 (GGNSKTLPGGSSKT). Positions 824-860 (NCAAKWGQCGGNGFNGPTCCQNGSRCQFVNEWYSQCL) constitute a CBM1 domain. Residue N845 is glycosylated (N-linked (GlcNAc...) asparagine).

The protein belongs to the glycosyl hydrolase 10 (cellulase F) family.

Its subcellular location is the secreted. It carries out the reaction Endohydrolysis of (1-&gt;4)-beta-D-xylosidic linkages in xylans.. It participates in glycan degradation; xylan degradation. Functionally, endo-1,4-beta-xylanase involved in the hydrolysis of xylan, a major structural heterogeneous polysaccharide found in plant biomass representing the second most abundant polysaccharide in the biosphere, after cellulose. Hydrolyzes both unsubstituted (oat spelts) and highly substituted (rye and wheat) forms of arabinoxylanslans. The chain is Endo-1,4-beta-xylanase B (xynB) from Neocallimastix patriciarum (Rumen fungus).